The sequence spans 450 residues: Na(+)/H(+) antiporter NhaA 2 (450 aa).

The next 12 helical transmembrane spans lie at 43–63, 86–106, 124–144, 155–175, 185–205, 208–228, 234–254, 258–278, 299–319, 326–346, 364–384, and 398–418; these read VGGAVLLVASAVALVWANSPW, LTLGTWAADGLLAVFFLVVGL, ALPMAAAVGGMVVPALIFVAV, GWAIPTATDIAFAVAVLAVIS, FLLTLAVVDDLLAVTVIAVFY, EINLTALGLSIVPLALFALCV, SWWLLLPLGVATWVLVHESGV, VAGVLLGFTVPVLRSVAAGGP, VAVPVFAFFAAGVAIGGVSGL, PITLGIILGLVVGKPVGIFLT, WIDVFGVALLAGIGFTVSLLI, and FVKVGVLTGSLVAALIAAVLL.

Belongs to the NhaA Na(+)/H(+) (TC 2.A.33) antiporter family.

The protein localises to the cell membrane. It carries out the reaction Na(+)(in) + 2 H(+)(out) = Na(+)(out) + 2 H(+)(in). Functionally, na(+)/H(+) antiporter that extrudes sodium in exchange for external protons. This chain is Na(+)/H(+) antiporter NhaA 2, found in Mycobacterium sp. (strain JLS).